The sequence spans 218 residues: Ribosomal RNA small subunit methyltransferase G (218 aa).

S-adenosyl-L-methionine contacts are provided by residues Gly82, Leu87, 137-138 (VE), and Arg152.

It belongs to the methyltransferase superfamily. RNA methyltransferase RsmG family.

It is found in the cytoplasm. The enzyme catalyses guanosine(527) in 16S rRNA + S-adenosyl-L-methionine = N(7)-methylguanosine(527) in 16S rRNA + S-adenosyl-L-homocysteine. Its function is as follows. Specifically methylates the N7 position of guanine in position 527 of 16S rRNA. This Herminiimonas arsenicoxydans protein is Ribosomal RNA small subunit methyltransferase G.